A 520-amino-acid polypeptide reads, in one-letter code: Probable protein phosphatase 2C 39 (520 aa).

Positions 160 to 507 (FLTSTEIKMA…DDVTIIVIIL (348 aa)) constitute a PPM-type phosphatase domain. Mn(2+)-binding residues include Asp-195, Gly-196, Asp-435, and Asp-498.

The protein belongs to the PP2C family. It depends on Mg(2+) as a cofactor. The cofactor is Mn(2+).

It carries out the reaction O-phospho-L-seryl-[protein] + H2O = L-seryl-[protein] + phosphate. The catalysed reaction is O-phospho-L-threonyl-[protein] + H2O = L-threonyl-[protein] + phosphate. This chain is Probable protein phosphatase 2C 39, found in Oryza sativa subsp. japonica (Rice).